A 262-amino-acid chain; its full sequence is Putative glycyl-radical enzyme activating enzyme HI_0520 (262 aa).

Positions 20–262 (VEGQGNRSSI…CGINKILTIL (243 aa)) constitute a Radical SAM core domain. Residues C34, C38, and C41 each coordinate [4Fe-4S] cluster. Residues 40–42 (YCH), G81, and 130–132 (DLK) each bind S-adenosyl-L-methionine.

Belongs to the organic radical-activating enzymes family. Requires [4Fe-4S] cluster as cofactor.

It catalyses the reaction glycyl-[protein] + reduced [flavodoxin] + S-adenosyl-L-methionine = glycin-2-yl radical-[protein] + semiquinone [flavodoxin] + 5'-deoxyadenosine + L-methionine + H(+). The sequence is that of Putative glycyl-radical enzyme activating enzyme HI_0520 from Haemophilus influenzae (strain ATCC 51907 / DSM 11121 / KW20 / Rd).